Consider the following 441-residue polypeptide: tRNA modification GTPase MnmE (441 aa).

3 residues coordinate (6S)-5-formyl-5,6,7,8-tetrahydrofolate: Arg22, Glu80, and Lys118. The region spanning 213-366 (GIYIAIVGEP…LLNLIKQRVE (154 aa)) is the TrmE-type G domain. GTP-binding positions include 223 to 228 (NSGKST), 242 to 248 (SEYAGTT), and 267 to 270 (DTAG). Residues Ser227 and Thr248 each contribute to the Mg(2+) site. Lys441 is a (6S)-5-formyl-5,6,7,8-tetrahydrofolate binding site.

Belongs to the TRAFAC class TrmE-Era-EngA-EngB-Septin-like GTPase superfamily. TrmE GTPase family. In terms of assembly, homodimer. Heterotetramer of two MnmE and two MnmG subunits. It depends on K(+) as a cofactor.

The protein resides in the cytoplasm. Its function is as follows. Exhibits a very high intrinsic GTPase hydrolysis rate. Involved in the addition of a carboxymethylaminomethyl (cmnm) group at the wobble position (U34) of certain tRNAs, forming tRNA-cmnm(5)s(2)U34. This chain is tRNA modification GTPase MnmE, found in Ehrlichia canis (strain Jake).